Here is a 609-residue protein sequence, read N- to C-terminus: NADH-ubiquinone oxidoreductase chain 5 (609 aa).

15 helical membrane passes run 6–26 (SSIL…MTNL), 35–55 (YATS…LLFF), 84–104 (YFSI…MQFS), 116–138 (RFIK…NNLF), 140–160 (LFIG…WWYG), 171–191 (AILY…WFCL), 240–260 (TPVS…FLMI), 272–292 (IMTA…ICAL), 300–319 (IVAF…LGIN), 330–350 (THAF…HSLN), 365–385 (MPFT…MPFL), 409–429 (MITL…IYFV), 456–476 (LALG…PTNI), 481–501 (MPWH…AIAL), and 581–601 (GLIK…FILH).

It belongs to the complex I subunit 5 family. As to quaternary structure, core subunit of respiratory chain NADH dehydrogenase (Complex I) which is composed of 45 different subunits.

It is found in the mitochondrion inner membrane. It catalyses the reaction a ubiquinone + NADH + 5 H(+)(in) = a ubiquinol + NAD(+) + 4 H(+)(out). Functionally, core subunit of the mitochondrial membrane respiratory chain NADH dehydrogenase (Complex I) which catalyzes electron transfer from NADH through the respiratory chain, using ubiquinone as an electron acceptor. Essential for the catalytic activity and assembly of complex I. The polypeptide is NADH-ubiquinone oxidoreductase chain 5 (Rattus norvegicus (Rat)).